The chain runs to 501 residues: Pre-mRNA-splicing factor 38B (501 aa).

Low complexity predominate over residues 1 to 11 (MAGSQQQQQQQ). Disordered regions lie at residues 1–28 (MAGS…LPLW) and 208–501 (DQHM…ADSP). Positions 243–273 (GDKRRSRTPRRSPSPRKSQNRSRSRSHHRER) are enriched in basic residues. Residues 281-302 (ELERERDRQRKEREGKDRDRDR) are a coiled coil. Positions 281 to 328 (ELERERDRQRKEREGKDRDRDRDRDRERDRERDRDRRRSRTPDRNAER) are enriched in basic and acidic residues. Basic residues predominate over residues 329-341 (RRSRSRERRRSRS). Residues 342–408 (TSRDKRTERK…EEKKHREEKR (67 aa)) show a composition bias toward basic and acidic residues. Positions 409-435 (SKRSRSRSRDRKHKAERSSKKRSRSGS) are enriched in basic residues. Residues 437–447 (SRQEAGEEKNR) show a composition bias toward basic and acidic residues. The segment covering 448-468 (KRERSHSKDRQHKRSRSKERS) has biased composition (basic residues). Residues 469-491 (HRRESSNERIHARQERPSSESGE) show a composition bias toward basic and acidic residues. Residues 492–501 (RTNSVRADSP) show a composition bias toward polar residues.

The protein belongs to the PRP38 family.

The protein localises to the nucleus. In terms of biological role, may be required for pre-mRNA splicing. This Danio rerio (Zebrafish) protein is Pre-mRNA-splicing factor 38B (prpf38b).